The sequence spans 489 residues: Glutamyl-tRNA(Gln) amidotransferase subunit A (489 aa).

Active-site charge relay system residues include Lys75 and Ser150. Residue Ser174 is the Acyl-ester intermediate of the active site.

Belongs to the amidase family. GatA subfamily. Heterotrimer of A, B and C subunits.

It catalyses the reaction L-glutamyl-tRNA(Gln) + L-glutamine + ATP + H2O = L-glutaminyl-tRNA(Gln) + L-glutamate + ADP + phosphate + H(+). In terms of biological role, allows the formation of correctly charged Gln-tRNA(Gln) through the transamidation of misacylated Glu-tRNA(Gln) in organisms which lack glutaminyl-tRNA synthetase. The reaction takes place in the presence of glutamine and ATP through an activated gamma-phospho-Glu-tRNA(Gln). The protein is Glutamyl-tRNA(Gln) amidotransferase subunit A of Gloeobacter violaceus (strain ATCC 29082 / PCC 7421).